The sequence spans 262 residues: Shikimate dehydrogenase (NADP(+)) (262 aa).

Residues 14-16 (SAS) and threonine 60 each bind shikimate. Catalysis depends on lysine 64, which acts as the Proton acceptor. Residues asparagine 85 and aspartate 100 each contribute to the shikimate site. Residues 121-125 (GAGGA), 145-150 (NRTAER), and phenylalanine 203 contribute to the NADP(+) site. A shikimate-binding site is contributed by tyrosine 205. Residue glycine 227 coordinates NADP(+).

This sequence belongs to the shikimate dehydrogenase family. Homodimer.

The enzyme catalyses shikimate + NADP(+) = 3-dehydroshikimate + NADPH + H(+). Its pathway is metabolic intermediate biosynthesis; chorismate biosynthesis; chorismate from D-erythrose 4-phosphate and phosphoenolpyruvate: step 4/7. Involved in the biosynthesis of the chorismate, which leads to the biosynthesis of aromatic amino acids. Catalyzes the reversible NADPH linked reduction of 3-dehydroshikimate (DHSA) to yield shikimate (SA). This Pyrobaculum aerophilum (strain ATCC 51768 / DSM 7523 / JCM 9630 / CIP 104966 / NBRC 100827 / IM2) protein is Shikimate dehydrogenase (NADP(+)).